A 146-amino-acid chain; its full sequence is Globin (146 aa).

At A1 the chain carries N-acetylalanine. Positions 1–146 constitute a Globin domain; the sequence is ALTEPQKTAL…LLTMLIKAHS (146 aa). Residues H65 and H97 each coordinate heme b.

Belongs to the globin family. In terms of assembly, homodimer.

The protein is Globin of Buccinum undatum (Common whelk).